The primary structure comprises 151 residues: Large-conductance mechanosensitive channel (151 aa).

The next 2 helical transmembrane spans lie at 19–39 (VGII…GDVL) and 85–105 (GLFI…FFLV).

It belongs to the MscL family. Homopentamer.

The protein resides in the cell inner membrane. Its function is as follows. Channel that opens in response to stretch forces in the membrane lipid bilayer. May participate in the regulation of osmotic pressure changes within the cell. This is Large-conductance mechanosensitive channel from Chlorobaculum parvum (strain DSM 263 / NCIMB 8327) (Chlorobium vibrioforme subsp. thiosulfatophilum).